A 163-amino-acid polypeptide reads, in one-letter code: NADH-quinone oxidoreductase subunit I (163 aa).

2 consecutive 4Fe-4S ferredoxin-type domains span residues 55 to 84 (RRYP…IEAE) and 94 to 123 (TRYD…EGPN). [4Fe-4S] cluster-binding residues include C64, C67, C70, C74, C103, C106, C109, and C113.

Belongs to the complex I 23 kDa subunit family. In terms of assembly, NDH-1 is composed of 14 different subunits. Subunits NuoA, H, J, K, L, M, N constitute the membrane sector of the complex. [4Fe-4S] cluster serves as cofactor.

The protein resides in the cell inner membrane. It carries out the reaction a quinone + NADH + 5 H(+)(in) = a quinol + NAD(+) + 4 H(+)(out). Its function is as follows. NDH-1 shuttles electrons from NADH, via FMN and iron-sulfur (Fe-S) centers, to quinones in the respiratory chain. The immediate electron acceptor for the enzyme in this species is believed to be ubiquinone. Couples the redox reaction to proton translocation (for every two electrons transferred, four hydrogen ions are translocated across the cytoplasmic membrane), and thus conserves the redox energy in a proton gradient. This chain is NADH-quinone oxidoreductase subunit I, found in Caulobacter vibrioides (strain ATCC 19089 / CIP 103742 / CB 15) (Caulobacter crescentus).